The chain runs to 312 residues: Glyoxylate/hydroxypyruvate reductase A (312 aa).

Arg227 is an active-site residue. Residue His275 is the Proton donor of the active site.

Belongs to the D-isomer specific 2-hydroxyacid dehydrogenase family. GhrA subfamily.

It localises to the cytoplasm. The catalysed reaction is glycolate + NADP(+) = glyoxylate + NADPH + H(+). It carries out the reaction (R)-glycerate + NAD(+) = 3-hydroxypyruvate + NADH + H(+). The enzyme catalyses (R)-glycerate + NADP(+) = 3-hydroxypyruvate + NADPH + H(+). In terms of biological role, catalyzes the NADPH-dependent reduction of glyoxylate and hydroxypyruvate into glycolate and glycerate, respectively. This chain is Glyoxylate/hydroxypyruvate reductase A, found in Escherichia coli O17:K52:H18 (strain UMN026 / ExPEC).